Consider the following 108-residue polypeptide: MKDVTKVALLIARAMCASSGTFVFELAFSITEYTGRPLGGGRSKYARRRRAISIARCHRCYRLWPPTVFTTRCDNKHCVPGISYNVRVAQFIDEGVTEVIPSVINKRE.

Positions 47-50 are basic; that stretch reads RRRR. The C4-type zinc-finger motif lies at 57-78; it reads CHRCYRLWPPTVFTTRCDNKHC.

It belongs to the carlaviruses nucleic acid-binding protein family.

In terms of biological role, suppressor of viral-induced RNA silencing. Increases the accumulation of viral RNA and enhances viral cell-to-cell movement by inhibiting RNA silencing. This is RNA silencing suppressor from Solanum tuberosum (Potato).